Here is a 447-residue protein sequence, read N- to C-terminus: MNEFEDIIYPGPSHVTTNIEFEDENIENNENYLNLVQILKELVDNNLKEEIEFKPMVGGVTNTLFKSSFITGQGSNKSVIIRLYGKGSEQFIDRKTEANIQYLLSKNGVGPKFYGTFENGCIYGYVEGDQLQLEDLYQNNILSLIAKETGRWHSLKLDINSNSQLLLSSSSDSSIKESTTISTSTSTSTSTSSTSPSTSPSLENSTLSPRNMNTQTSSTSLFKNLNSWINNAMTLTSKESKGSMISKINLNRYKEEAMSLMSFIEEHYSGEEYINFCHNDLIPRNMIYNKEKGQVKFIDFEYSGYNFRGYDIGNFFCEFSGLDLDYTKYPSIEIQKRFIKNYLISINNCKNIQQKQKQKQQQQQIQNSINDENMDIENDELLYEPSKEEIHNLYIESNHLTLGSHLMWGFWGIIQHFSSSIDFDYIDYAIKRFKQYDLVKNKVLSLK.

Residues 178–208 are compositionally biased toward low complexity; sequence STTISTSTSTSTSTSSTSPSTSPSLENSTLS. Residues 178–217 are disordered; it reads STTISTSTSTSTSTSSTSPSTSPSLENSTLSPRNMNTQTS.

The protein belongs to the choline/ethanolamine kinase family.

It localises to the cytoplasm. It catalyses the reaction ethanolamine + ATP = phosphoethanolamine + ADP + H(+). The protein operates within phospholipid metabolism; phosphatidylethanolamine biosynthesis; phosphatidylethanolamine from ethanolamine: step 1/3. Highly specific for ethanolamine phosphorylation. May be a rate-controlling step in phosphatidylethanolamine biosynthesis. The sequence is that of Probable ethanolamine kinase B (etnkB) from Dictyostelium discoideum (Social amoeba).